A 690-amino-acid polypeptide reads, in one-letter code: MTLVMSPDSSYGRYDAQPPVDGGMVNPVHREREPELHIEFDGTTVLCRVCGDKASGFHYGVHSCEGCKGFFRRSIQQKIQYRPCTKNQQCSILRINRNRCQYCRLKKCIAVGMSRDAVRFGRVPKREKARILAAMQQSSSSRAHEQAAAAELDDAPRLLARVVRAHLDTCEFTRDRVAAMRARARDCPTYSQPTLACPLNPAPELQSEKEFSQRFAHVIRGVIDFAGLIPGFQLLTQDDKFTLLKSGLFDALFVRLICMFDAPLNSIICLNGQLMKRDSIQSGANARFLVDSTFKFAERMNSMNLTDAEIGLFCAIVLITPDRPGLRNIELVERMHARLKSCLQTVIAQNRADRPGFLRELMDTLPDLRTLSTLHTEKLVVFRTEHKELLRQQMWGDEEVCPWADSGVDDSARSPLGSVSSSESGEAPSDCGTPLLAATLAGRRRLDSRGSVDEEALGVAHLAHNGLTVTPVRPPPRYRKLDSPTDSGIESGNEKHERIVGPGSGCSSPRSSLEEHMEDRRPLAADDMPVLKRVLQAPPLYDASSLMDEAYKPHKKFRAMRRDTGEAEARPMRPTPSPQPMHPHPGSPAHPAHPAHSPRPLRAPLSSTHSVLAKSLMEGPRMTPEQLKRTDIIQQYMRRGEAGEECRAGLLLYRGASPLQVDVADAPQPLNLSKKSPSPPRSFMPPMLEA.

Positions 44-120 form a DNA-binding region, nuclear receptor; sequence TVLCRVCGDK…VGMSRDAVRF (77 aa). 2 NR C4-type zinc fingers span residues 47–67 and 84–108; these read CRVC…CEGC and CTKN…LKKC. The 248-residue stretch at 154-401 folds into the NR LBD domain; the sequence is DAPRLLARVV…QQMWGDEEVC (248 aa). Disordered regions lie at residues 411 to 434, 467 to 516, 562 to 604, and 666 to 690; these read SARS…CGTP, LTVT…LEEH, RDTG…LRAP, and APQP…MLEA. The span at 414–434 shows a compositional bias: low complexity; sequence SPLGSVSSSESGEAPSDCGTP. Residues 562–571 are compositionally biased toward basic and acidic residues; the sequence is RDTGEAEARP. Residues 573–588 show a composition bias toward pro residues; it reads RPTPSPQPMHPHPGSP. Composition is skewed to low complexity over residues 589 to 604 and 667 to 676; these read AHPA…LRAP and PQPLNLSKKS.

Belongs to the nuclear hormone receptor family. NR1 subfamily.

The protein resides in the nucleus. Functionally, orphan receptor possibly involved in the regulation of genes in the ecdysteroid cascade. The chain is Ecdysone-inducible protein E75 (E75) from Choristoneura fumiferana (Spruce budworm moth).